A 174-amino-acid polypeptide reads, in one-letter code: RNA pyrophosphohydrolase (174 aa).

The region spanning 6–150 is the Nudix hydrolase domain; that stretch reads GFRPNVGIVI…KREVYRRVMK (145 aa). Positions 38 to 59 match the Nudix box motif; the sequence is GGVDDGETPEQAMFRELYEEIG.

Belongs to the Nudix hydrolase family. RppH subfamily. Requires a divalent metal cation as cofactor.

Its function is as follows. Accelerates the degradation of transcripts by removing pyrophosphate from the 5'-end of triphosphorylated RNA, leading to a more labile monophosphorylated state that can stimulate subsequent ribonuclease cleavage. This chain is RNA pyrophosphohydrolase, found in Tolumonas auensis (strain DSM 9187 / NBRC 110442 / TA 4).